We begin with the raw amino-acid sequence, 425 residues long: Histone-binding protein RBBP4 (425 aa).

An N-acetylalanine modification is found at Ala-2. 7 WD repeats span residues 32-125 (YDLV…NHEG), 126-175 (EVNR…RLRG), 176-223 (HQKE…KTIF), 225-270 (GHTA…HSVD), 271-314 (AHTA…HSFE), 315-371 (SHKD…FIHG), and 372-404 (GHTA…VWQM).

This sequence belongs to the WD repeat RBAP46/RBAP48/MSI1 family. Binds directly to histone H4, probably via helix 1 of the histone fold, a region that is not accessible when histone H4 is in chromatin. Forms a large corepressor complex that contains ncor1, sin3a and possibly sin3b, histone deacetylases hdac2, hdac1, rbbp4 and possibly rbbp7.

It is found in the nucleus. It localises to the chromosome. The protein resides in the telomere. Its function is as follows. Core histone-binding subunit that may target chromatin assembly factors, chromatin remodeling factors and histone deacetylases to their histone substrates in a manner that is regulated by nucleosomal DNA. Component of several complexes which regulate chromatin metabolism. The sequence is that of Histone-binding protein RBBP4 (rbbp4) from Xenopus tropicalis (Western clawed frog).